We begin with the raw amino-acid sequence, 332 residues long: Ketol-acid reductoisomerase (NADP(+)) (332 aa).

The KARI N-terminal Rossmann domain occupies 2-182 (AKVYIDKDAS…GATRAGVIET (181 aa)). NADP(+)-binding positions include 25–28 (YGSQ), serine 53, and 83–86 (DMVQ). Residue histidine 108 is part of the active site. Glycine 134 lines the NADP(+) pocket. The region spanning 183–328 (TFKEETETDL…RQIREISLRG (146 aa)) is the KARI C-terminal knotted domain. Residues aspartate 191, glutamate 195, glutamate 227, and glutamate 231 each coordinate Mg(2+). A substrate-binding site is contributed by serine 252.

The protein belongs to the ketol-acid reductoisomerase family. The cofactor is Mg(2+).

The catalysed reaction is (2R)-2,3-dihydroxy-3-methylbutanoate + NADP(+) = (2S)-2-acetolactate + NADPH + H(+). It carries out the reaction (2R,3R)-2,3-dihydroxy-3-methylpentanoate + NADP(+) = (S)-2-ethyl-2-hydroxy-3-oxobutanoate + NADPH + H(+). The protein operates within amino-acid biosynthesis; L-isoleucine biosynthesis; L-isoleucine from 2-oxobutanoate: step 2/4. It participates in amino-acid biosynthesis; L-valine biosynthesis; L-valine from pyruvate: step 2/4. Its function is as follows. Involved in the biosynthesis of branched-chain amino acids (BCAA). Catalyzes an alkyl-migration followed by a ketol-acid reduction of (S)-2-acetolactate (S2AL) to yield (R)-2,3-dihydroxy-isovalerate. In the isomerase reaction, S2AL is rearranged via a Mg-dependent methyl migration to produce 3-hydroxy-3-methyl-2-ketobutyrate (HMKB). In the reductase reaction, this 2-ketoacid undergoes a metal-dependent reduction by NADPH to yield (R)-2,3-dihydroxy-isovalerate. The chain is Ketol-acid reductoisomerase (NADP(+)) from Sulfurisphaera tokodaii (strain DSM 16993 / JCM 10545 / NBRC 100140 / 7) (Sulfolobus tokodaii).